The primary structure comprises 169 residues: Sorting nexin-24 (169 aa).

M1 bears the N-acetylmethionine mark. Residues 1-125 (MEVYIPSFRY…SFDETESEES (125 aa)) enclose the PX domain. 4 residues coordinate a 1,2-diacyl-sn-glycero-3-phospho-(1D-myo-inositol-3-phosphate): R38, S40, K61, and R74. S113 and S116 each carry phosphoserine.

Belongs to the sorting nexin family.

It localises to the cytoplasmic vesicle membrane. Its function is as follows. May be involved in several stages of intracellular trafficking. The polypeptide is Sorting nexin-24 (SNX24) (Bos taurus (Bovine)).